The chain runs to 247 residues: Ribosomal RNA small subunit methyltransferase J (247 aa).

S-adenosyl-L-methionine contacts are provided by residues 101–102 (RD), 117–118 (ER), 153–154 (SS), and Asp171.

It belongs to the methyltransferase superfamily. RsmJ family.

The protein localises to the cytoplasm. The catalysed reaction is guanosine(1516) in 16S rRNA + S-adenosyl-L-methionine = N(2)-methylguanosine(1516) in 16S rRNA + S-adenosyl-L-homocysteine + H(+). Its function is as follows. Specifically methylates the guanosine in position 1516 of 16S rRNA. The sequence is that of Ribosomal RNA small subunit methyltransferase J from Photorhabdus laumondii subsp. laumondii (strain DSM 15139 / CIP 105565 / TT01) (Photorhabdus luminescens subsp. laumondii).